The following is a 1337-amino-acid chain: Activated Cdc42 kinase-like (1337 aa).

A Phosphoserine modification is found at Ser-71. The region spanning 133–399 (ISVNKQLGTG…GEIYDQLPDM (267 aa)) is the Protein kinase domain. ATP is bound by residues 139–147 (LGTGEFGIV) and Lys-164. Asp-260 serves as the catalytic Proton acceptor. Phosphotyrosine occurs at positions 291 and 292. The 62-residue stretch at 399–460 (MKPEQLKAVV…NPSNTVAFLE (62 aa)) folds into the SH3 domain. One can recognise a CRIB domain in the interval 488–502 (ISKPQNDFKHTGHVG). A disordered region spans residues 714-739 (SGDTNGNKHGHGLLPTLSKKKSSGTV). A phosphoserine mark is found at Ser-764 and Ser-778. A disordered region spans residues 786–822 (RFPHLSNNGSGDKSGGLGTSGSAHTPTHGNASPFPKK). Over residues 805–815 (SGSAHTPTHGN) the composition is skewed to polar residues. Residues Ser-831, Ser-918, and Ser-924 each carry the phosphoserine modification. Disordered regions lie at residues 906–969 (AGLS…TSTK) and 1024–1045 (PSGM…PTVG). Pro residues predominate over residues 947–957 (PESPNPIPLPP).

This sequence belongs to the protein kinase superfamily. Tyr protein kinase family.

It catalyses the reaction L-tyrosyl-[protein] + ATP = O-phospho-L-tyrosyl-[protein] + ADP + H(+). Functionally, likely to act as a downstream effector of Cdc42 during dorsal closure, acting in a kinase independent manner with the other ACK family member Ack to positively regulate expression of the myosin zip by promoting the endocytosis of Egfr in the amnioserosa (AS). This is Activated Cdc42 kinase-like from Drosophila melanogaster (Fruit fly).